A 319-amino-acid chain; its full sequence is Heavy metal-associated isoprenylated plant protein 9 (319 aa).

Composition is skewed to basic and acidic residues over residues 1–11 and 24–45; these read MGEEVKPEAKE and EEKK…KPKE. A disordered region spans residues 1-57; the sequence is MGEEVKPEAKEAASAPQAVPAEEEEKKKDVAEEKKVAAEEEKPKEEEEPQPPPPPPP. Positions 21 to 48 form a coiled coil; the sequence is AEEEEKKKDVAEEKKVAAEEEKPKEEEE. HMA domains lie at 55–118 and 144–208; these read PPPF…KRMA and LTTV…KQAR. 4 residues coordinate a metal cation: Cys-66, Cys-69, Cys-155, and Cys-158. Residues 207–282 form a disordered region; sequence ARIVPQPDPE…RDNEMTAMAQ (76 aa). A compositionally biased stretch (basic and acidic residues) spans 224-254; that stretch reads QEEKKEESGEGNEKPPETGEEKEEEKKKEGE. A compositionally biased stretch (acidic residues) spans 255 to 268; sequence ENGEEGGGEEAAAT. Cys-316 bears the Cysteine methyl ester mark. Cys-316 carries the S-farnesyl cysteine lipid modification. Positions 317 to 319 are cleaved as a propeptide — removed in mature form; that stretch reads CIS.

Belongs to the HIPP family.

In terms of biological role, heavy-metal-binding protein. The chain is Heavy metal-associated isoprenylated plant protein 9 from Arabidopsis thaliana (Mouse-ear cress).